The chain runs to 619 residues: ATP-dependent RNA helicase abstrakt (619 aa).

Residues 1 to 11 show a composition bias toward basic residues; that stretch reads MAHVKRYRRSS. 2 disordered regions span residues 1–25 and 50–69; these read MAHVKRYRRSSKSSEEGDLDNEDYV and ETAQPKSSSENENEDDSQGA. Ser11, Ser13, Ser14, Ser56, Ser57, Ser58, and Ser66 each carry phosphoserine. A Q motif motif is present at residues 177–205; it reads RSFREMKFPKGILNGLAAKGIKNPTPIQV. The region spanning 208 to 392 is the Helicase ATP-binding domain; it reads LPTVLAGRDL…RSALVKPVTI (185 aa). Residue 221–228 participates in ATP binding; it reads AFTGSGKT. Residues 340–343 carry the DEAD box motif; it reads DEAD. One can recognise a Helicase C-terminal domain in the interval 403-563; the sequence is NVTQQVEYVK…EVPDFLDELA (161 aa). A CCHC-type zinc finger spans residues 577 to 594; the sequence is HGCTYCGGLGHRITECPK.

This sequence belongs to the DEAD box helicase family. DDX41 subfamily.

Its subcellular location is the nucleus. The catalysed reaction is ATP + H2O = ADP + phosphate + H(+). Functionally, ATP-dependent RNA helicase. Is essential for the directed and fasciculated early outgrowth of the bolwig nerves, as well as for its navigation at later stages. Is required during post-transcriptional gene expression. Plays a role during morphogenetic process, apoptosis and the establishment of cell polarity. The chain is ATP-dependent RNA helicase abstrakt (abs) from Drosophila melanogaster (Fruit fly).